We begin with the raw amino-acid sequence, 922 residues long: Lysine-specific demethylase 4 (922 aa).

A compositionally biased stretch (polar residues) spans 1 to 15 (MASAATTTHFPSSRI). 2 disordered regions span residues 1 to 21 (MASAATTTHFPSSRIPSEPCA) and 42 to 61 (SSSCHVENDSRPLSPTMFTD). The 44-residue stretch at 87–130 (VLTFYPTMREFKNFSQYIKKIEQNGGHLKAGIAKIVAPEGWTPR) folds into the JmjN domain. Residue Tyr213 coordinates 2-oxoglutarate. In terms of domain architecture, JmjC spans 223–388 (DAQVEEWNMN…YGKDAVLCDC (166 aa)). Fe cation is bound by residues His265 and Glu267. Asn275 and Lys283 together coordinate 2-oxoglutarate. Cys314 and His320 together coordinate Zn(2+). Residue Lys321 coordinates 2-oxoglutarate. His356 contacts Fe cation. Residues Cys386 and Cys388 each coordinate Zn(2+). Residues 435-475 (KRRQSLADASKIAKRARLGASSTATDSDGSSGSSGSEEATE) form a disordered region. Low complexity predominate over residues 453–475 (GASSTATDSDGSSGSSGSEEATE). Residues 639–675 (TTSCQLCELRGGALIPCQIGTDSTWAHVACALFNRRA) form a C2HC pre-PHD-type zinc finger. The segment at 723–783 (WECVVCHRTD…GVVMICHKHE (61 aa)) adopts a PHD-type; degenerate zinc-finger fold.

This sequence belongs to the JHDM3 histone demethylase family. Fe(2+) serves as cofactor.

It is found in the nucleus. The catalysed reaction is N(6),N(6),N(6)-trimethyl-L-lysyl(9)-[histone H3] + 2 2-oxoglutarate + 2 O2 = N(6)-methyl-L-lysyl(9)-[histone H3] + 2 formaldehyde + 2 succinate + 2 CO2. It catalyses the reaction N(6),N(6),N(6)-trimethyl-L-lysyl(36)-[histone H3] + 2 2-oxoglutarate + 2 O2 = N(6)-methyl-L-lysyl(36)-[histone H3] + 2 formaldehyde + 2 succinate + 2 CO2. Functionally, histone demethylase that specifically demethylates 'Lys-9' and 'Lys-36' residues of histone H3, thereby playing a central role in histone code. Demethylation of Lys residue generates formaldehyde and succinate. Involved in the negative regulation of lifespan in a germline-dependent fashion. This chain is Lysine-specific demethylase 4 (jmjd-2), found in Caenorhabditis elegans.